A 453-amino-acid chain; its full sequence is Phosphoglucosamine mutase (453 aa).

The active-site Phosphoserine intermediate is Ser105. Mg(2+)-binding residues include Ser105, Asp244, Asp246, and Asp248. At Ser105 the chain carries Phosphoserine.

It belongs to the phosphohexose mutase family. The cofactor is Mg(2+). Post-translationally, activated by phosphorylation.

It catalyses the reaction alpha-D-glucosamine 1-phosphate = D-glucosamine 6-phosphate. Functionally, catalyzes the conversion of glucosamine-6-phosphate to glucosamine-1-phosphate. The sequence is that of Phosphoglucosamine mutase from Blochmanniella pennsylvanica (strain BPEN).